We begin with the raw amino-acid sequence, 132 residues long: Small ribosomal subunit protein uS8 (132 aa).

It belongs to the universal ribosomal protein uS8 family. As to quaternary structure, part of the 30S ribosomal subunit. Contacts proteins S5 and S12.

In terms of biological role, one of the primary rRNA binding proteins, it binds directly to 16S rRNA central domain where it helps coordinate assembly of the platform of the 30S subunit. This is Small ribosomal subunit protein uS8 from Clostridium botulinum (strain ATCC 19397 / Type A).